Consider the following 329-residue polypeptide: Glycerol-3-phosphate dehydrogenase [NAD(P)+] (329 aa).

The NADPH site is built by Ser-13, Trp-14, His-34, and Lys-105. 3 residues coordinate sn-glycerol 3-phosphate: Lys-105, Gly-134, and Ser-136. Ala-138 serves as a coordination point for NADPH. Sn-glycerol 3-phosphate-binding residues include Lys-189, Asp-242, Ser-252, Arg-253, and Asn-254. Lys-189 (proton acceptor) is an active-site residue. Residue Arg-253 coordinates NADPH. NADPH contacts are provided by Val-277 and Glu-279.

Belongs to the NAD-dependent glycerol-3-phosphate dehydrogenase family.

Its subcellular location is the cytoplasm. The catalysed reaction is sn-glycerol 3-phosphate + NAD(+) = dihydroxyacetone phosphate + NADH + H(+). It catalyses the reaction sn-glycerol 3-phosphate + NADP(+) = dihydroxyacetone phosphate + NADPH + H(+). The protein operates within membrane lipid metabolism; glycerophospholipid metabolism. In terms of biological role, catalyzes the reduction of the glycolytic intermediate dihydroxyacetone phosphate (DHAP) to sn-glycerol 3-phosphate (G3P), the key precursor for phospholipid synthesis. This chain is Glycerol-3-phosphate dehydrogenase [NAD(P)+], found in Legionella pneumophila (strain Paris).